We begin with the raw amino-acid sequence, 146 residues long: MPKYYCDYCDTYLTHDSPSVRKTHCTGRKHRDNVKFYYQKWMEEQAQHLIDATTAAFKAGKITNNPFAGGPSSAPPKPSGVSIPPPNMGAPPRPGMPGMPFMPPMMNPMMTGMRPPPIMNPMAMMGPPPPLGTIPGVRPPIMNGPK.

The Matrin-type zinc-finger motif lies at 4 to 36 (YYCDYCDTYLTHDSPSVRKTHCTGRKHRDNVKF). Positions 64–96 (NNPFAGGPSSAPPKPSGVSIPPPNMGAPPRPGM) are disordered. Over residues 73 to 96 (SAPPKPSGVSIPPPNMGAPPRPGM) the composition is skewed to pro residues.

The protein belongs to the U1 small nuclear ribonucleoprotein C family. In terms of assembly, U1 snRNP is composed of the 7 core Sm proteins B/B', D1, D2, D3, E, F and G that assemble in a heptameric protein ring on the Sm site of the small nuclear RNA to form the core snRNP, and at least 3 U1 snRNP-specific proteins U1-70K, U1-A and U1-C. U1-C interacts with U1 snRNA and the 5' splice-site region of the pre-mRNA.

The protein resides in the nucleus. In terms of biological role, component of the spliceosomal U1 snRNP, which is essential for recognition of the pre-mRNA 5' splice-site and the subsequent assembly of the spliceosome. U1-C is directly involved in initial 5' splice-site recognition for both constitutive and regulated alternative splicing. The interaction with the 5' splice-site seems to precede base-pairing between the pre-mRNA and the U1 snRNA. Stimulates commitment or early (E) complex formation by stabilizing the base pairing of the 5' end of the U1 snRNA and the 5' splice-site region. The polypeptide is U1 small nuclear ribonucleoprotein C (Drosophila pseudoobscura pseudoobscura (Fruit fly)).